Consider the following 192-residue polypeptide: Type 1 phosphatases regulator YPI2 (192 aa).

Disordered stretches follow at residues 1–53 (MLQR…GKHK) and 65–192 (EFGQ…PVQK). Low complexity predominate over residues 8–18 (QTSSSTQTETT). The span at 25-49 (RRPETRQKEDSKVKWTEDVIDNEHM) shows a compositional bias: basic and acidic residues. The span at 69 to 79 (SSDESSDSSSD) shows a compositional bias: low complexity. Basic and acidic residues predominate over residues 86–103 (YERNNDFDQNHRHSHNFD). Residues 134 to 148 (KGNTGMSKPSSSSPD) are compositionally biased toward polar residues. The segment covering 157 to 169 (IHKRNKKVRKPKR) has biased composition (basic residues).

The protein belongs to the YPI1 family.

The protein localises to the nucleus. In terms of biological role, regulator of type 1 phosphatases which maintains protein phosphatase activity under strict control. The sequence is that of Type 1 phosphatases regulator YPI2 (YPI2) from Scheffersomyces stipitis (strain ATCC 58785 / CBS 6054 / NBRC 10063 / NRRL Y-11545) (Yeast).